The primary structure comprises 379 residues: Cytochrome b (379 aa).

Transmembrane regions (helical) follow at residues 33 to 53, 77 to 98, 113 to 133, and 178 to 198; these read FGSL…FLAM, WLIR…FIHV, WNIG…GYVL, and FFAF…VHLL. The heme b site is built by histidine 83 and histidine 97. Heme b is bound by residues histidine 182 and histidine 196. Histidine 201 is a binding site for a ubiquinone. 4 consecutive transmembrane segments (helical) span residues 226-246, 288-308, 320-340, and 347-367; these read IKDL…ALFF, LGGV…PLLN, ITQT…WIGG, and FTMI…ILMP.

It belongs to the cytochrome b family. The cytochrome bc1 complex contains 11 subunits: 3 respiratory subunits (MT-CYB, CYC1 and UQCRFS1), 2 core proteins (UQCRC1 and UQCRC2) and 6 low-molecular weight proteins (UQCRH/QCR6, UQCRB/QCR7, UQCRQ/QCR8, UQCR10/QCR9, UQCR11/QCR10 and a cleavage product of UQCRFS1). This cytochrome bc1 complex then forms a dimer. Heme b serves as cofactor.

The protein resides in the mitochondrion inner membrane. Functionally, component of the ubiquinol-cytochrome c reductase complex (complex III or cytochrome b-c1 complex) that is part of the mitochondrial respiratory chain. The b-c1 complex mediates electron transfer from ubiquinol to cytochrome c. Contributes to the generation of a proton gradient across the mitochondrial membrane that is then used for ATP synthesis. This chain is Cytochrome b (MT-CYB), found in Akodon dolores (Dolorous grass mouse).